We begin with the raw amino-acid sequence, 190 residues long: Crossover junction endodeoxyribonuclease RuvC (190 aa).

Residues Asp-8, Glu-67, and Asp-139 contribute to the active site. Asp-8, Glu-67, and Asp-139 together coordinate Mg(2+).

It belongs to the RuvC family. Homodimer which binds Holliday junction (HJ) DNA. The HJ becomes 2-fold symmetrical on binding to RuvC with unstacked arms; it has a different conformation from HJ DNA in complex with RuvA. In the full resolvosome a probable DNA-RuvA(4)-RuvB(12)-RuvC(2) complex forms which resolves the HJ. Mg(2+) is required as a cofactor.

It is found in the cytoplasm. The enzyme catalyses Endonucleolytic cleavage at a junction such as a reciprocal single-stranded crossover between two homologous DNA duplexes (Holliday junction).. Its function is as follows. The RuvA-RuvB-RuvC complex processes Holliday junction (HJ) DNA during genetic recombination and DNA repair. Endonuclease that resolves HJ intermediates. Cleaves cruciform DNA by making single-stranded nicks across the HJ at symmetrical positions within the homologous arms, yielding a 5'-phosphate and a 3'-hydroxyl group; requires a central core of homology in the junction. The consensus cleavage sequence is 5'-(A/T)TT(C/G)-3'. Cleavage occurs on the 3'-side of the TT dinucleotide at the point of strand exchange. HJ branch migration catalyzed by RuvA-RuvB allows RuvC to scan DNA until it finds its consensus sequence, where it cleaves and resolves the cruciform DNA. The polypeptide is Crossover junction endodeoxyribonuclease RuvC (Actinobacillus succinogenes (strain ATCC 55618 / DSM 22257 / CCUG 43843 / 130Z)).